Here is a 262-residue protein sequence, read N- to C-terminus: 5'-nucleotidase SurE (262 aa).

Residues aspartate 13, aspartate 14, serine 44, and asparagine 97 each contribute to the a divalent metal cation site.

Belongs to the SurE nucleotidase family. A divalent metal cation is required as a cofactor.

The protein localises to the cytoplasm. It catalyses the reaction a ribonucleoside 5'-phosphate + H2O = a ribonucleoside + phosphate. Nucleotidase that shows phosphatase activity on nucleoside 5'-monophosphates. The polypeptide is 5'-nucleotidase SurE (Myxococcus xanthus (strain DK1622)).